The sequence spans 151 residues: Ribosomal RNA large subunit methyltransferase H (151 aa).

Residues G100 and L119 to F124 contribute to the S-adenosyl-L-methionine site.

This sequence belongs to the RNA methyltransferase RlmH family. As to quaternary structure, homodimer.

The protein resides in the cytoplasm. It carries out the reaction pseudouridine(1915) in 23S rRNA + S-adenosyl-L-methionine = N(3)-methylpseudouridine(1915) in 23S rRNA + S-adenosyl-L-homocysteine + H(+). In terms of biological role, specifically methylates the pseudouridine at position 1915 (m3Psi1915) in 23S rRNA. This is Ribosomal RNA large subunit methyltransferase H from Thermotoga maritima (strain ATCC 43589 / DSM 3109 / JCM 10099 / NBRC 100826 / MSB8).